Here is a 720-residue protein sequence, read N- to C-terminus: Serrate RNA effector molecule (720 aa).

3 disordered regions span residues 1 to 192, 288 to 335, and 361 to 380; these read MADV…NPQR, LNKS…FTSD, and ENVL…LHSG. A compositionally biased stretch (low complexity) spans 33 to 47; the sequence is SLPQQEQEQDQQQLP. Residues 48-76 are compositionally biased toward basic and acidic residues; sequence LRRERDSRERRDERDIERPPPNRRERDRS. Phosphoserine is present on residues Ser-76, Ser-90, and Ser-92. Basic residues predominate over residues 99-115; it reads DRRHSPPQRRSPPQKRY. Basic and acidic residues-rich tracts occupy residues 116–126 and 136–164; these read RRDDNGYDGRR and PDRR…ERPH. Positions 288–297 are enriched in polar residues; sequence LNKSGRTSEP. The span at 368 to 378 shows a compositional bias: basic and acidic residues; sequence ETEKSGREKLH. The C2H2-type zinc finger occupies 498–523; that stretch reads YGCGAKGCTKLFHAAEFVYKHLKLKH. 2 disordered regions span residues 543 to 622 and 666 to 687; these read YMND…AFGG and RDPS…APFL. A compositionally biased stretch (basic and acidic residues) spans 570–607; the sequence is PSMENRLRDDRGGRRERDGRANGNDRNDRSEDQQRGDN. Gly residues predominate over residues 608 to 622; sequence DGGNPGEVGYDAFGG. Position 689 is a phosphoserine (Ser-689).

The protein belongs to the ARS2 family. As to quaternary structure, interacts with HYL1. Interacts with RCF3, RS40 and RS41. As to expression, expressed in shoot meristems and in emerging organ primordia throughout development.

The protein resides in the nucleus. It localises to the nucleus speckle. Functionally, acts as a mediator between the cap-binding complex (CBC) and both the pre-mRNA splicing and primary microRNAs (miRNAs) processing machinery. Required for proper processing of primary miRNAs to miRNAs, thereby playing a role in RNA-mediated gene silencing (RNAi) by miRNAs. Does not participate in sense post-transcriptional gene silencing. Acts as a regulator of meristem activity and adaxial leaf fate via the miRNA gene-silencing pathway by regulating the expression of PHB and by limiting the competence of shoot tissue to respond to KNOX expression. Its function is however not limited to miRNA-mediated repression of leaf polarity genes, but rather acts as a general regulator of primary microRNAs processing. Also critical for the accumulation of the trans-acting small interfering RNA (ta-siRNA). Required for pre-mRNA splicing. The protein is Serrate RNA effector molecule (SE) of Arabidopsis thaliana (Mouse-ear cress).